Reading from the N-terminus, the 340-residue chain is ATP-dependent 6-phosphofructokinase (340 aa).

Gly-11 contributes to the ATP binding site. 21–25 (RAVVR) contacts ADP. ATP is bound by residues 72-73 (RY) and 102-105 (GDGS). Asp-103 is a binding site for Mg(2+). Residue 125-127 (TID) coordinates substrate. Asp-127 serves as the catalytic Proton acceptor. Arg-154 provides a ligand contact to ADP. Substrate contacts are provided by residues Arg-162 and 169-171 (MGR). ADP-binding positions include 185–187 (GAD), Lys-211, and 213–215 (KNH). Substrate is bound by residues Glu-222, Arg-244, and 250–253 (HIQR).

The protein belongs to the phosphofructokinase type A (PFKA) family. ATP-dependent PFK group I subfamily. Prokaryotic clade 'B1' sub-subfamily. As to quaternary structure, homotetramer. It depends on Mg(2+) as a cofactor.

It localises to the cytoplasm. It catalyses the reaction beta-D-fructose 6-phosphate + ATP = beta-D-fructose 1,6-bisphosphate + ADP + H(+). Its pathway is carbohydrate degradation; glycolysis; D-glyceraldehyde 3-phosphate and glycerone phosphate from D-glucose: step 3/4. Allosterically activated by ADP and other diphosphonucleosides, and allosterically inhibited by phosphoenolpyruvate. Catalyzes the phosphorylation of D-fructose 6-phosphate to fructose 1,6-bisphosphate by ATP, the first committing step of glycolysis. The polypeptide is ATP-dependent 6-phosphofructokinase (Lactococcus lactis subsp. lactis (Streptococcus lactis)).